The following is a 191-amino-acid chain: Adenylate kinase (191 aa).

12–17 lines the ATP pocket; that stretch reads GSGKTT. An NMP region spans residues 34–63; the sequence is STGDLLRAESAKKTERGLLIEKFTSQGELV. AMP is bound by residues threonine 35, arginine 40, 61 to 63, 88 to 91, and glutamine 95; these read ELV and GYPR. Residues 130–136 are LID; sequence GRSRGAD. Arginine 131 contacts ATP. Positions 133 and 145 each coordinate AMP. Arginine 173 is an ATP binding site.

This sequence belongs to the adenylate kinase family. In terms of assembly, monomer.

It is found in the cytoplasm. The enzyme catalyses AMP + ATP = 2 ADP. It participates in purine metabolism; AMP biosynthesis via salvage pathway; AMP from ADP: step 1/1. In terms of biological role, catalyzes the reversible transfer of the terminal phosphate group between ATP and AMP. Plays an important role in cellular energy homeostasis and in adenine nucleotide metabolism. This is Adenylate kinase from Helicobacter pylori (strain Shi470).